The chain runs to 682 residues: TPR repeat-containing thioredoxin TTL4 (682 aa).

Disordered stretches follow at residues 1 to 120 (MSHY…GTPL) and 132 to 157 (NNNN…TGNI). Ser8 is modified (phosphoserine). Basic and acidic residues predominate over residues 16–39 (KFRDSLSFQRDDDVINKPDFRELD). Phosphoserine is present on Ser42. Over residues 48–71 (GSSSAAATPAASGSSSSSSGSASG) the composition is skewed to low complexity. TPR repeat units lie at residues 211–244 (SEEV…SPEN), 246–278 (AYRS…DPSY), 280–312 (RAHQ…PDQA), 402–435 (AYVL…DHSN), 449–482 (VAKA…DAFN), 483–516 (SVLY…QPSY), and 518–550 (KALL…LPGD). Residues 587–674 (DKFKTATSLP…MVCPSHQLLE (88 aa)) form the Thioredoxin domain.

As to expression, widely expressed.

In terms of biological role, involved in osmotic and salt stress tolerance. May play a role in the control of meristematic cell size during osmotic stress. This chain is TPR repeat-containing thioredoxin TTL4 (TTL4), found in Arabidopsis thaliana (Mouse-ear cress).